Consider the following 116-residue polypeptide: Large ribosomal subunit protein bL20 (116 aa).

This sequence belongs to the bacterial ribosomal protein bL20 family.

Binds directly to 23S ribosomal RNA and is necessary for the in vitro assembly process of the 50S ribosomal subunit. It is not involved in the protein synthesizing functions of that subunit. This Fusobacterium nucleatum subsp. nucleatum (strain ATCC 25586 / DSM 15643 / BCRC 10681 / CIP 101130 / JCM 8532 / KCTC 2640 / LMG 13131 / VPI 4355) protein is Large ribosomal subunit protein bL20.